The sequence spans 72 residues: Translation initiation factor IF-1 (72 aa).

The S1-like domain occupies 1 to 72 (MAKEEQIELE…TKGRITFRMK (72 aa)).

This sequence belongs to the IF-1 family. In terms of assembly, component of the 30S ribosomal translation pre-initiation complex which assembles on the 30S ribosome in the order IF-2 and IF-3, IF-1 and N-formylmethionyl-tRNA(fMet); mRNA recruitment can occur at any time during PIC assembly.

It localises to the cytoplasm. Its function is as follows. One of the essential components for the initiation of protein synthesis. Stabilizes the binding of IF-2 and IF-3 on the 30S subunit to which N-formylmethionyl-tRNA(fMet) subsequently binds. Helps modulate mRNA selection, yielding the 30S pre-initiation complex (PIC). Upon addition of the 50S ribosomal subunit IF-1, IF-2 and IF-3 are released leaving the mature 70S translation initiation complex. This is Translation initiation factor IF-1 from Alcanivorax borkumensis (strain ATCC 700651 / DSM 11573 / NCIMB 13689 / SK2).